The following is a 312-amino-acid chain: Olfactory receptor 51B6 (312 aa).

The Extracellular segment spans residues 1–23 (MGLNKSASTFQLTGFPGMEKAHH). N4 carries an N-linked (GlcNAc...) asparagine glycan. A helical membrane pass occupies residues 24–44 (WIFIPLLAAYISILLGNGTLL). At 45 to 52 (FLIRNDHN) the chain is on the cytoplasmic side. The helical transmembrane segment at 53–73 (LHEPMYYFLAMLAATDLGVTL) threads the bilayer. The Extracellular segment spans residues 74-97 (TTMPTVLGVLWLDHREIGHGACFS). C95 and C187 are disulfide-bonded. The chain crosses the membrane as a helical span at residues 98 to 118 (QAYFIHTLSVMESGVLLAMAY). The Cytoplasmic segment spans residues 119-137 (DCFITIRSPLRYTSILTNT). The chain crosses the membrane as a helical span at residues 138–158 (QVMKIGVRVLTRAGLSIMPIV). At 159-194 (VRLHWFPYCRSHVLSHAFCLHQDVIKLACADITFNR) the chain is on the extracellular side. A helical membrane pass occupies residues 195–215 (LYPVVVLFAMVLLDFLIIFFS). Residues 216–235 (YILILKTVMGIGSGGERAKA) are Cytoplasmic-facing. The helical transmembrane segment at 236 to 256 (LNTCVSHICCILVFYVTVVCL) threads the bilayer. Residues 257–271 (TFIHRFGKHVPHVVH) are Extracellular-facing. A helical membrane pass occupies residues 272-292 (ITMSYIHFLFPPFMNPFIYSI). The Cytoplasmic portion of the chain corresponds to 293–312 (KTKQIQSGILRLFSLPHSRA).

This sequence belongs to the G-protein coupled receptor 1 family.

The protein resides in the cell membrane. Functionally, odorant receptor. This chain is Olfactory receptor 51B6 (OR51B6), found in Homo sapiens (Human).